We begin with the raw amino-acid sequence, 182 residues long: ATP-dependent protease subunit HslV (182 aa).

Threonine 6 is an active-site residue. Residues alanine 164, cysteine 167, and threonine 170 each contribute to the Na(+) site.

It belongs to the peptidase T1B family. HslV subfamily. A double ring-shaped homohexamer of HslV is capped on each side by a ring-shaped HslU homohexamer. The assembly of the HslU/HslV complex is dependent on binding of ATP.

The protein resides in the cytoplasm. It catalyses the reaction ATP-dependent cleavage of peptide bonds with broad specificity.. Its activity is regulated as follows. Allosterically activated by HslU binding. In terms of biological role, protease subunit of a proteasome-like degradation complex believed to be a general protein degrading machinery. This chain is ATP-dependent protease subunit HslV, found in Borreliella burgdorferi (strain ATCC 35210 / DSM 4680 / CIP 102532 / B31) (Borrelia burgdorferi).